Consider the following 463-residue polypeptide: Spermidine/putrescine import ATP-binding protein PotA (463 aa).

Positions 10–240 constitute an ABC transporter domain; the sequence is IEVSHVSKFF…PINSFVADFI (231 aa). 42-49 serves as a coordination point for ATP; sequence GPSGCGKT.

It belongs to the ABC transporter superfamily. Spermidine/putrescine importer (TC 3.A.1.11.1) family. In terms of assembly, the complex is composed of two ATP-binding proteins (PotA), two transmembrane proteins (PotB and PotC) and a solute-binding protein (PotD).

It is found in the cell inner membrane. It carries out the reaction ATP + H2O + polyamine-[polyamine-binding protein]Side 1 = ADP + phosphate + polyamineSide 2 + [polyamine-binding protein]Side 1.. Its function is as follows. Part of the ABC transporter complex PotABCD involved in spermidine/putrescine import. Responsible for energy coupling to the transport system. The protein is Spermidine/putrescine import ATP-binding protein PotA of Bacteroides thetaiotaomicron (strain ATCC 29148 / DSM 2079 / JCM 5827 / CCUG 10774 / NCTC 10582 / VPI-5482 / E50).